A 280-amino-acid chain; its full sequence is Energy-coupling factor transporter ATP-binding protein EcfA2 (280 aa).

Residues 3 to 245 (INLQNVSYTY…VSLLEKKQLG (243 aa)) enclose the ABC transporter domain. Residue 40–47 (GHTGSGKS) participates in ATP binding.

It belongs to the ABC transporter superfamily. Energy-coupling factor EcfA family. Forms a stable energy-coupling factor (ECF) transporter complex composed of 2 membrane-embedded substrate-binding proteins (S component), 2 ATP-binding proteins (A component) and 2 transmembrane proteins (T component).

The protein localises to the cell membrane. ATP-binding (A) component of a common energy-coupling factor (ECF) ABC-transporter complex. Unlike classic ABC transporters this ECF transporter provides the energy necessary to transport a number of different substrates. This Streptococcus pyogenes serotype M3 (strain ATCC BAA-595 / MGAS315) protein is Energy-coupling factor transporter ATP-binding protein EcfA2.